The primary structure comprises 364 residues: DNA replication and repair protein RecF (364 aa).

30-37 (GNNGQGKT) contacts ATP.

It belongs to the RecF family.

Its subcellular location is the cytoplasm. Its function is as follows. The RecF protein is involved in DNA metabolism; it is required for DNA replication and normal SOS inducibility. RecF binds preferentially to single-stranded, linear DNA. It also seems to bind ATP. This is DNA replication and repair protein RecF from Geotalea daltonii (strain DSM 22248 / JCM 15807 / FRC-32) (Geobacter daltonii).